A 98-amino-acid chain; its full sequence is MASTNFRPLHDRVVVKRVESEEKTKGGIIIPDTAKEKPAEGEIIAVGPGTRDDKGALVALDVKVGDRVLFGKWSGTEVKLDGVDLLIMKEADIMGVIG.

Belongs to the GroES chaperonin family. Heptamer of 7 subunits arranged in a ring. Interacts with the chaperonin GroEL.

The protein resides in the cytoplasm. Functionally, together with the chaperonin GroEL, plays an essential role in assisting protein folding. The GroEL-GroES system forms a nano-cage that allows encapsulation of the non-native substrate proteins and provides a physical environment optimized to promote and accelerate protein folding. GroES binds to the apical surface of the GroEL ring, thereby capping the opening of the GroEL channel. The polypeptide is Co-chaperonin GroES (Allorhizobium ampelinum (strain ATCC BAA-846 / DSM 112012 / S4) (Agrobacterium vitis (strain S4))).